Here is a 222-residue protein sequence, read N- to C-terminus: Beta-casein (222 aa).

Residues 1 to 15 (MKVLILACLVALAIA) form the signal peptide. T27 is modified (phosphothreonine). Phosphoserine occurs at positions 30, 32, 33, and 34.

This sequence belongs to the beta-casein family. As to expression, mammary gland specific. Secreted in milk.

Its subcellular location is the secreted. In terms of biological role, important role in determination of the surface properties of the casein micelles. This Capra hircus (Goat) protein is Beta-casein (CSN2).